A 340-amino-acid chain; its full sequence is Uroporphyrinogen decarboxylase (340 aa).

Substrate is bound by residues 23 to 27, D72, Y147, T202, and H316; that span reads RQAGR.

This sequence belongs to the uroporphyrinogen decarboxylase family. In terms of assembly, homodimer.

Its subcellular location is the cytoplasm. The catalysed reaction is uroporphyrinogen III + 4 H(+) = coproporphyrinogen III + 4 CO2. It participates in porphyrin-containing compound metabolism; protoporphyrin-IX biosynthesis; coproporphyrinogen-III from 5-aminolevulinate: step 4/4. Functionally, catalyzes the decarboxylation of four acetate groups of uroporphyrinogen-III to yield coproporphyrinogen-III. This chain is Uroporphyrinogen decarboxylase, found in Pelobacter propionicus (strain DSM 2379 / NBRC 103807 / OttBd1).